We begin with the raw amino-acid sequence, 213 residues long: Andrastin A biosynthesis cluster protein B (213 aa).

Functionally, part of the gene cluster that mediates the biosynthesis of andrastins, meroterpenoid compounds that exhibit inhibitory activity against ras farnesyltransferase, suggesting that they could be promising leads for antitumor agents. The first step of the pathway is the synthesis of 3,5-dimethylorsellinic acid (DMOA) by the polyketide synthase adrD via condensation of one acetyl-CoA starter unit with 3 malonyl-CoA units and 2 methylations. DMAO is then converted to farnesyl-DMAO by the prenyltransferase adrG. The methyltransferase adrK catalyzes the methylation of the carboxyl group of farnesyl-DMAO to farnesyl-DMAO methyl ester which is further converted to epoxyfarnesyl-DMAO methyl ester by the FAD-dependent monooxygenase adrH. The terpene cyclase adrI then catalyzes the carbon skeletal rearrangement to generate the andrastin E, the first compound in the pathway having the andrastin scaffold, with the tetracyclic ring system. The post-cyclization tailoring enzymes adrF, adrE, adrJ, and adrA, are involved in the conversion of andrastin E into andrastin A. The short chain dehydrogenase adrF is responsible for the oxidation of the C-3 a hydroxyl group of andrastin E to yield the corresponding ketone, andrastin D. The ketoreductase adrE stereoselectively reduces the carbonyl moiety to reverse the stereochemistry of the C-3 position to yield andrastin F. The acetyltransferase adrJ is the acetyltransferase that attaches the acetyl group to the C-3 hydroxyl group of andrastin F to yield andrastin C. Finally, the cytochrome P450 monooxygenase adrA catalyzes two sequential oxidation reactions of the C-23 methyl group, to generate the corresponding alcohol andrastin B, and aldehyde andrastin A. The protein is Andrastin A biosynthesis cluster protein B of Penicillium rubens (strain ATCC 28089 / DSM 1075 / NRRL 1951 / Wisconsin 54-1255) (Penicillium chrysogenum).